Consider the following 229-residue polypeptide: Ribonuclease 3 (229 aa).

Residues 3–125 (VNALQEKLGY…LIGGIFLDSN (123 aa)) enclose the RNase III domain. Residue Glu-38 participates in Mg(2+) binding. The active site involves Asp-42. Residues Asn-111 and Glu-114 each contribute to the Mg(2+) site. The active site involves Glu-114. Residues 155–225 (DPKTRLQEYM…AAKVLEALEH (71 aa)) form the DRBM domain.

It belongs to the ribonuclease III family. In terms of assembly, homodimer. Mg(2+) is required as a cofactor.

Its subcellular location is the cytoplasm. It carries out the reaction Endonucleolytic cleavage to 5'-phosphomonoester.. Functionally, digests double-stranded RNA. Involved in the processing of primary rRNA transcript to yield the immediate precursors to the large and small rRNAs (23S and 16S). Processes some mRNAs, and tRNAs when they are encoded in the rRNA operon. Processes pre-crRNA and tracrRNA of type II CRISPR loci if present in the organism. In Blochmanniella pennsylvanica (strain BPEN), this protein is Ribonuclease 3.